We begin with the raw amino-acid sequence, 372 residues long: Glutamate 5-kinase (372 aa).

An ATP-binding site is contributed by Lys-14. Positions 54, 141, and 153 each coordinate substrate. ATP is bound by residues 173–174 (TD) and 215–221 (TGGMATK). One can recognise a PUA domain in the interval 280-358 (RGQVVLDTGA…DNIEEILGYD (79 aa)).

Belongs to the glutamate 5-kinase family.

Its subcellular location is the cytoplasm. The catalysed reaction is L-glutamate + ATP = L-glutamyl 5-phosphate + ADP. It participates in amino-acid biosynthesis; L-proline biosynthesis; L-glutamate 5-semialdehyde from L-glutamate: step 1/2. Its function is as follows. Catalyzes the transfer of a phosphate group to glutamate to form L-glutamate 5-phosphate. The sequence is that of Glutamate 5-kinase from Shewanella halifaxensis (strain HAW-EB4).